We begin with the raw amino-acid sequence, 1409 residues long: MAP kinase-activating death domain protein (1409 aa).

One can recognise a uDENN domain in the interval 26–230; the sequence is RGASQSSPDA…VPVPGKTKVQ (205 aa). Positions 251–390 constitute a cDENN domain; the sequence is RFTLIDFPLH…DATHLKERLK (140 aa). A dDENN domain is found at 392 to 496; sequence AINKMTTMTV…ECCLCPKNET (105 aa). 4 disordered regions span residues 654–701, 761–784, 902–1008, and 1015–1034; these read SFDH…MKGL, QHIV…QSKN, SSSA…KVKT, and PQNL…SFLA. Composition is skewed to polar residues over residues 680–691 and 761–772; these read SDASDTPTSRGS and QHIVRSKTQPNP. Low complexity-rich tracts occupy residues 773-784 and 902-913; these read TSQQTANQQSKN and SSSAPSTMTTPS. The segment covering 915–925 has biased composition (basic and acidic residues); sequence HSNDILKESRP. Positions 941–961 are enriched in polar residues; that stretch reads LGQNVTPTSTNNHEIAQSTRS. The span at 963–1003 shows a compositional bias: pro residues; the sequence is ALPPPVPPREAPPIPKRNPPPLGAPPKVPEGARAPPPLPPR. Positions 1020–1031 are enriched in low complexity; the sequence is PNNQPAQPSSPS. Positions 1109 to 1184 constitute a Death domain; that stretch reads GMDQEPSEMI…GLVCSKEINK (76 aa).

Belongs to the MADD family. In terms of assembly, interacts with cab-1. Expressed in nearly all neurons.

The protein resides in the cell membrane. It localises to the cytoplasm. Guanyl-nucleotide exchange factor that regulates small GTPases. Converts GDP-bound inactive form of rab-3 and cab-1 to the GTP-bound active forms. Regulator of presynaptic activity that interacts with rab-3 to regulate synaptic vesicle release. Is also a regulator of the cab-1 synaptic transmission pathway. Probably by converting rab-3 to its GTP-bound active form, plays a role in the recruitment of endophilin unc-57 to synaptic vesicles. Probably by activating rab-3 and thus regulating the trafficking of dense-core vesicles, plays a role in AVG neuron-mediated formation of the right axon tract of the ventral nerve cord. Regulates anterior body muscle contractions (aBOC) and the expulsion steps during the defecation motor program (DMP). Probably by regulating DMP, required for fatty acid uptake by intestinal cells. This Caenorhabditis elegans protein is MAP kinase-activating death domain protein (aex-3).